The sequence spans 1183 residues: PAN2-PAN3 deadenylation complex catalytic subunit PAN2 (1183 aa).

A disordered region spans residues 1–24 (MDGWTEISRIAATTQPPKGPSPHI). WD repeat units follow at residues 159–207 (DLNK…SIKS), 269–309 (PFPA…NVFL), and 327–366 (SKAPFMTNLEISENGDFFAFSDSYATMHLWTLNNSGSTIT). Residues 369–520 (FVNFPASIEQ…FQYKVPLSRK (152 aa)) are linker. The USP domain occupies 521–919 (KIPNCYSRLQ…KPVILVYHDS (399 aa)). One can recognise an Exonuclease domain in the interval 977 to 1151 (IAIDAEFVNL…EDAYTALLLY (175 aa)). A divalent metal cation-binding residues include D980, E982, D1090, and D1143.

It belongs to the peptidase C19 family. PAN2 subfamily. As to quaternary structure, forms a heterotrimer with an asymmetric homodimer of the regulatory subunit PAN3 to form the poly(A)-nuclease (PAN) deadenylation complex. A divalent metal cation is required as a cofactor.

It localises to the cytoplasm. It catalyses the reaction Exonucleolytic cleavage of poly(A) to 5'-AMP.. With respect to regulation, positively regulated by the regulatory subunit PAN3. Functionally, catalytic subunit of the poly(A)-nuclease (PAN) deadenylation complex, one of two cytoplasmic mRNA deadenylases involved in mRNA turnover. PAN specifically shortens poly(A) tails of RNA and the activity is stimulated by poly(A)-binding protein PAB1. PAN deadenylation is followed by rapid degradation of the shortened mRNA tails by the CCR4-NOT complex. Deadenylated mRNAs are then degraded by two alternative mechanisms, namely exosome-mediated 3'-5' exonucleolytic degradation, or deadenylation-dependent mRNA decaping and subsequent 5'-3' exonucleolytic degradation by XRN1. May also be involved in post-transcriptional maturation of mRNA poly(A) tails. This chain is PAN2-PAN3 deadenylation complex catalytic subunit PAN2, found in Scheffersomyces stipitis (strain ATCC 58785 / CBS 6054 / NBRC 10063 / NRRL Y-11545) (Yeast).